Consider the following 1035-residue polypeptide: Isoleucine--tRNA ligase (1035 aa).

Positions 48–58 (PTANGRPHVGH) match the 'HIGH' region motif. The 'KMSKS' region motif lies at 589–593 (KMSKH). Residue Lys-592 participates in ATP binding.

It belongs to the class-I aminoacyl-tRNA synthetase family. IleS type 2 subfamily. As to quaternary structure, monomer. Zn(2+) is required as a cofactor.

It is found in the cytoplasm. The enzyme catalyses tRNA(Ile) + L-isoleucine + ATP = L-isoleucyl-tRNA(Ile) + AMP + diphosphate. Its function is as follows. Catalyzes the attachment of isoleucine to tRNA(Ile). As IleRS can inadvertently accommodate and process structurally similar amino acids such as valine, to avoid such errors it has two additional distinct tRNA(Ile)-dependent editing activities. One activity is designated as 'pretransfer' editing and involves the hydrolysis of activated Val-AMP. The other activity is designated 'posttransfer' editing and involves deacylation of mischarged Val-tRNA(Ile). This Clostridium acetobutylicum (strain ATCC 824 / DSM 792 / JCM 1419 / IAM 19013 / LMG 5710 / NBRC 13948 / NRRL B-527 / VKM B-1787 / 2291 / W) protein is Isoleucine--tRNA ligase.